A 597-amino-acid polypeptide reads, in one-letter code: Dictomallein-3 (597 aa).

The N-terminal stretch at methionine 1–cysteine 19 is a signal peptide. In terms of domain architecture, Peptidase M66 spans proline 148–tyrosine 409. Histidine 301 serves as a coordination point for Zn(2+). Residue glutamate 302 is part of the active site. Residues histidine 305 and histidine 311 each coordinate Zn(2+).

Belongs to the dictomallein family. The cofactor is Zn(2+).

The protein localises to the secreted. This Dictyostelium discoideum (Social amoeba) protein is Dictomallein-3 (dtmlC).